Consider the following 94-residue polypeptide: Alpha-conotoxin Ms20.3 (94 aa).

An N-terminal signal peptide occupies residues Met-1–Gly-24. A propeptide spanning residues Gln-25 to Arg-45 is cleaved from the precursor. Glu-49 carries the post-translational modification 4-carboxyglutamate. Residue Pro-55 is modified to 4-hydroxyproline. Cystine bridges form between Cys-63–Cys-72, Cys-68–Cys-80, Cys-73–Cys-90, and Cys-78–Cys-92.

The protein belongs to the conotoxin D superfamily. In terms of assembly, hetero-, homo- or pseudo-homodimer (identical sequence, different post-translational modifications). Homodimer of [carboxyGlu-49, hydroxyPro-55]Ms20.3, and heterodimer of [carboxyGlu-49, hydroxyPro-55]Ms20.3 and [carboxy'Glu-50', hydroxy'Pro-56']Ms20.5 may exist. Expressed by the venom duct.

Its subcellular location is the secreted. In terms of biological role, alpha-D-conopeptides act on postsynaptic membranes, they bind to the nicotinic acetylcholine receptors (nAChR) and thus inhibit them. Through its two C-terminal domains, this homodimeric protein would bind to two nAChR allosteric sites, located outside the nAChR C-loop of the principal binding face and at the adjacent binding interface in a clockwise direction. This toxin specifically blocks mammalian neuronal nAChR of the alpha-7/CHRNA7 (IC(50)=0.12 nM), alpha-3-beta-2/CHRNA3-CHRNB2 (IC(50)=1.08 nM), and alpha-4-beta-2/CHRNA4-CHRNB2 (IC(50)=4.5 nM) subtypes. Has no effect on alpha-3-beta-4/CHRNA3-CHRNB4, alpha-4-beta-4/CHRNA4-CHRNB4 and alpha-1-beta-1-epsilon-delta/CHRNA1-CHRNB1-CHRNE-CHRND subtypes of nAChRs. This chain is Alpha-conotoxin Ms20.3, found in Conus mustelinus (Weasel cone).